The sequence spans 250 residues: Urease accessory protein UreG 3 (250 aa).

Residues 1–24 form a disordered region; that stretch reads MPDNASAQQPGQPAQGPNEHYHQP. Positions 7 to 17 are enriched in low complexity; that stretch reads AQQPGQPAQGP. 37-44 lines the GTP pocket; that stretch reads GPVGTGKS. The interval 230 to 250 is disordered; sequence GTHVPTDPGPMAPHSHSHDGS.

This sequence belongs to the SIMIBI class G3E GTPase family. UreG subfamily. As to quaternary structure, homodimer. UreD, UreF and UreG form a complex that acts as a GTP-hydrolysis-dependent molecular chaperone, activating the urease apoprotein by helping to assemble the nickel containing metallocenter of UreC. The UreE protein probably delivers the nickel.

It is found in the cytoplasm. In terms of biological role, facilitates the functional incorporation of the urease nickel metallocenter. This process requires GTP hydrolysis, probably effectuated by UreG. This Streptomyces griseus subsp. griseus (strain JCM 4626 / CBS 651.72 / NBRC 13350 / KCC S-0626 / ISP 5235) protein is Urease accessory protein UreG 3.